Reading from the N-terminus, the 946-residue chain is DNA ligase 4 (946 aa).

Positions 295, 297, 302, 355, 397, 457, 462, 479, and 481 each coordinate ATP. Lys297 serves as the catalytic N6-AMP-lysine intermediate. A Mg(2+)-binding site is contributed by Glu355. Position 457 (Glu457) interacts with Mg(2+). 2 BRCT domains span residues 688 to 787 (HRSD…PSHC) and 845 to 945 (VPHF…NYRL).

It belongs to the ATP-dependent DNA ligase family. It depends on Mg(2+) as a cofactor.

It localises to the nucleus. It catalyses the reaction ATP + (deoxyribonucleotide)n-3'-hydroxyl + 5'-phospho-(deoxyribonucleotide)m = (deoxyribonucleotide)n+m + AMP + diphosphate.. Its function is as follows. DNA ligase involved in DNA non-homologous end joining (NHEJ); required for double-strand break (DSB) repair. The polypeptide is DNA ligase 4 (LIG4) (Candida glabrata (strain ATCC 2001 / BCRC 20586 / JCM 3761 / NBRC 0622 / NRRL Y-65 / CBS 138) (Yeast)).